We begin with the raw amino-acid sequence, 757 residues long: Xaa-Pro dipeptidyl-peptidase (757 aa).

Active-site charge relay system residues include Ser-348, Asp-468, and His-498.

This sequence belongs to the peptidase S15 family. As to quaternary structure, homodimer.

The protein resides in the cytoplasm. It carries out the reaction Hydrolyzes Xaa-Pro-|- bonds to release unblocked, N-terminal dipeptides from substrates including Ala-Pro-|-p-nitroanilide and (sequentially) Tyr-Pro-|-Phe-Pro-|-Gly-Pro-|-Ile.. In terms of biological role, removes N-terminal dipeptides sequentially from polypeptides having unsubstituted N-termini provided that the penultimate residue is proline. In Streptococcus pneumoniae (strain Hungary19A-6), this protein is Xaa-Pro dipeptidyl-peptidase.